The chain runs to 313 residues: MIHLPQGSFTQGLIVGQLLTLAIIYVFLRFFLFCSPIPKSVANSPKQTGNETPDETPSTPLSNNKKRYKKPLTILEPHILNLLYDVNEHEPESLDWFNVLIAQALIQFRYDACSNDVALRKLETVLNKGAQDKSMVDHIYVRDLSLGDGFPVFSHCRVLPHQHNSSQLRAEMLVSLTDNINCTVDTKLLLNFPKPAFATLPLSITVRICKFVGKIMIYFSPSNGAGQPAYMNLSFDPNFVISLQVSSLVGARSKLQDIPKITQLIESRIRQWFTNRCVSPQFQQIAIPNLWPTSAKEGHARSHAPQEESSNED.

Topologically, residues 1 to 12 are lumenal; that stretch reads MIHLPQGSFTQG. Residues 13–33 traverse the membrane as a helical segment; it reads LIVGQLLTLAIIYVFLRFFLF. Residues 34-313 lie on the Cytoplasmic side of the membrane; that stretch reads CSPIPKSVAN…APQEESSNED (280 aa). Residues 42–63 show a composition bias toward polar residues; the sequence is ANSPKQTGNETPDETPSTPLSN. The tract at residues 42–65 is disordered; the sequence is ANSPKQTGNETPDETPSTPLSNNK. One can recognise an SMP-LTD domain in the interval 90–288; that stretch reads EPESLDWFNV…SPQFQQIAIP (199 aa).

It belongs to the MMM1 family. In terms of assembly, homodimer. Component of the ER-mitochondria encounter structure (ERMES) or MDM complex, composed of mmm1, mdm10, mdm12 and mdm34. A mmm1 homodimer associates with one molecule of mdm12 on each side in a pairwise head-to-tail manner, and the SMP-LTD domains of mmm1 and mdm12 generate a continuous hydrophobic tunnel for phospholipid trafficking.

It localises to the endoplasmic reticulum membrane. Its function is as follows. Component of the ERMES/MDM complex, which serves as a molecular tether to connect the endoplasmic reticulum (ER) and mitochondria. Components of this complex are involved in the control of mitochondrial shape and protein biogenesis, and function in nonvesicular lipid trafficking between the ER and mitochondria. The mdm12-mmm1 subcomplex functions in the major beta-barrel assembly pathway that is responsible for biogenesis of all outer membrane beta-barrel proteins, and acts in a late step after the SAM complex. The mdm10-mdm12-mmm1 subcomplex further acts in the TOM40-specific pathway after the action of the mdm12-mmm1 complex. Essential for establishing and maintaining the structure of mitochondria and maintenance of mtDNA nucleoids. The sequence is that of Maintenance of mitochondrial morphology protein 1 from Schizosaccharomyces pombe (strain 972 / ATCC 24843) (Fission yeast).